Here is a 279-residue protein sequence, read N- to C-terminus: Putative pyruvate, phosphate dikinase regulatory protein (279 aa).

Position 156-163 (156-163 (GISRVGKT)) interacts with ADP.

This sequence belongs to the pyruvate, phosphate/water dikinase regulatory protein family. PDRP subfamily.

It catalyses the reaction N(tele)-phospho-L-histidyl/L-threonyl-[pyruvate, phosphate dikinase] + ADP = N(tele)-phospho-L-histidyl/O-phospho-L-threonyl-[pyruvate, phosphate dikinase] + AMP + H(+). The catalysed reaction is N(tele)-phospho-L-histidyl/O-phospho-L-threonyl-[pyruvate, phosphate dikinase] + phosphate + H(+) = N(tele)-phospho-L-histidyl/L-threonyl-[pyruvate, phosphate dikinase] + diphosphate. Its function is as follows. Bifunctional serine/threonine kinase and phosphorylase involved in the regulation of the pyruvate, phosphate dikinase (PPDK) by catalyzing its phosphorylation/dephosphorylation. The polypeptide is Putative pyruvate, phosphate dikinase regulatory protein (Chloroflexus aurantiacus (strain ATCC 29366 / DSM 635 / J-10-fl)).